Here is a 338-residue protein sequence, read N- to C-terminus: Cytochrome f (338 aa).

Residues 1–45 (MNFKVCSFPSRRQSIAAFVRVLMVILLTLGALVSSDVLLPQPAAA) form the signal peptide. Heme contacts are provided by Tyr46, Cys66, Cys69, and His70. A helical transmembrane segment spans residues 300–316 (IAFLAAITLTQILLVLK).

This sequence belongs to the cytochrome f family. As to quaternary structure, the 4 large subunits of the cytochrome b6-f complex are cytochrome b6, subunit IV (17 kDa polypeptide, PetD), cytochrome f and the Rieske protein, while the 4 small subunits are PetG, PetL, PetM and PetN. The complex functions as a dimer. The cofactor is heme.

It localises to the cellular thylakoid membrane. Its function is as follows. Component of the cytochrome b6-f complex, which mediates electron transfer between photosystem II (PSII) and photosystem I (PSI), cyclic electron flow around PSI, and state transitions. The protein is Cytochrome f (petA) of Leptolyngbya laminosa (Phormidium laminosum).